Consider the following 191-residue polypeptide: MYGPKDHGWIEVVAGPMYSGKTEELIRRIRRAEIAKQKVQVFKPEIDNRYSKQDVVSHAGDKIQSVPVKSSKEILEKLLDDTDVIGIDEAQFFDDFLVEIVSKIANNNRRVICAGLDMDFKGEPFGPMPKLMAIAEFVDKIQAVCMVCNNPATRTQRLINGKPAKKSDPVVLIGAQESYEARCRKCHRVPR.

Residues 15-22 (GPMYSGKT) and 88-91 (DEAQ) each bind ATP. Catalysis depends on glutamate 89, which acts as the Proton acceptor. Cysteine 145, cysteine 148, cysteine 183, and cysteine 186 together coordinate Zn(2+).

This sequence belongs to the thymidine kinase family. Homotetramer.

It is found in the cytoplasm. The enzyme catalyses thymidine + ATP = dTMP + ADP + H(+). This chain is Thymidine kinase, found in Clostridium botulinum (strain Hall / ATCC 3502 / NCTC 13319 / Type A).